Reading from the N-terminus, the 258-residue chain is Thiazole synthase 1 (258 aa).

The active-site Schiff-base intermediate with DXP is the Lys97. 1-deoxy-D-xylulose 5-phosphate is bound by residues Gly158, 184–185 (AG), and 206–207 (NT).

This sequence belongs to the ThiG family. Homotetramer. Forms heterodimers with either ThiH or ThiS.

It localises to the cytoplasm. The catalysed reaction is [ThiS sulfur-carrier protein]-C-terminal-Gly-aminoethanethioate + 2-iminoacetate + 1-deoxy-D-xylulose 5-phosphate = [ThiS sulfur-carrier protein]-C-terminal Gly-Gly + 2-[(2R,5Z)-2-carboxy-4-methylthiazol-5(2H)-ylidene]ethyl phosphate + 2 H2O + H(+). It participates in cofactor biosynthesis; thiamine diphosphate biosynthesis. Catalyzes the rearrangement of 1-deoxy-D-xylulose 5-phosphate (DXP) to produce the thiazole phosphate moiety of thiamine. Sulfur is provided by the thiocarboxylate moiety of the carrier protein ThiS. In vitro, sulfur can be provided by H(2)S. The chain is Thiazole synthase 1 from Syntrophotalea carbinolica (strain DSM 2380 / NBRC 103641 / GraBd1) (Pelobacter carbinolicus).